The chain runs to 91 residues: Small ribosomal subunit protein uS19 (91 aa).

This sequence belongs to the universal ribosomal protein uS19 family.

Functionally, protein S19 forms a complex with S13 that binds strongly to the 16S ribosomal RNA. This Pseudoalteromonas atlantica (strain T6c / ATCC BAA-1087) protein is Small ribosomal subunit protein uS19.